Reading from the N-terminus, the 132-residue chain is Small ribosomal subunit protein uS8c (132 aa).

The protein belongs to the universal ribosomal protein uS8 family. Part of the 30S ribosomal subunit.

It localises to the plastid. It is found in the chloroplast. Its function is as follows. One of the primary rRNA binding proteins, it binds directly to 16S rRNA central domain where it helps coordinate assembly of the platform of the 30S subunit. The chain is Small ribosomal subunit protein uS8c (rps8) from Acorus calamus (Sweet flag).